Here is a 206-residue protein sequence, read N- to C-terminus: Alpha-S1-casein (206 aa).

The N-terminal stretch at 1–15 is a signal peptide; the sequence is MKLLIFICLAAVALA. A phosphoserine mark is found at Ser33, Ser77, Ser78, Ser79, Ser80, Ser81, Ser82, and Ser89. The interval 67-106 is disordered; that stretch reads HGMEGHEQRGSSSSSSEEVVGNSAEQKHVQKEEDVPSQSY. Residues 91-100 show a composition bias toward basic and acidic residues; the sequence is EQKHVQKEED.

It belongs to the alpha-casein family. Mammary gland specific. Secreted in milk.

It is found in the secreted. Its function is as follows. Important role in the capacity of milk to transport calcium phosphate. The sequence is that of Alpha-S1-casein (CSN1S1) from Sus scrofa (Pig).